Consider the following 141-residue polypeptide: Phosphoribosyl-AMP cyclohydrolase (141 aa).

Aspartate 88 lines the Mg(2+) pocket. Position 89 (cysteine 89) interacts with Zn(2+). The Mg(2+) site is built by aspartate 90 and aspartate 92. Zn(2+) is bound by residues cysteine 109 and cysteine 116.

This sequence belongs to the PRA-CH family. In terms of assembly, homodimer. Mg(2+) serves as cofactor. The cofactor is Zn(2+).

The protein localises to the cytoplasm. It catalyses the reaction 1-(5-phospho-beta-D-ribosyl)-5'-AMP + H2O = 1-(5-phospho-beta-D-ribosyl)-5-[(5-phospho-beta-D-ribosylamino)methylideneamino]imidazole-4-carboxamide. The protein operates within amino-acid biosynthesis; L-histidine biosynthesis; L-histidine from 5-phospho-alpha-D-ribose 1-diphosphate: step 3/9. In terms of biological role, catalyzes the hydrolysis of the adenine ring of phosphoribosyl-AMP. The sequence is that of Phosphoribosyl-AMP cyclohydrolase from Paracidovorax citrulli (strain AAC00-1) (Acidovorax citrulli).